A 351-amino-acid chain; its full sequence is Prostaglandin reductase 2 (351 aa).

A substrate-binding site is contributed by 99–100; the sequence is FY. NADP(+) contacts are provided by residues 165–168, K192, Y208, N231, 253–259, 287–289, and N337; these read GACG, CGQISQY, and FMV. 288-290 contacts substrate; the sequence is MVL.

This sequence belongs to the NADP-dependent oxidoreductase L4BD family. Monomer.

Its subcellular location is the cytoplasm. The catalysed reaction is 13,14-dihydro-15-oxo-prostaglandin E2 + NAD(+) = 15-oxoprostaglandin E2 + NADH + H(+). It carries out the reaction 13,14-dihydro-15-oxo-prostaglandin E2 + NADP(+) = 15-oxoprostaglandin E2 + NADPH + H(+). The enzyme catalyses 13,14-dihydro-15-oxo-PGF2alpha + NADP(+) = 15-oxoprostaglandin F2alpha + NADPH + H(+). It catalyses the reaction 13,14-dihydro-15-oxo-prostaglandin E1 + NADP(+) = 15-oxoprostaglandin E1 + NADPH + H(+). The catalysed reaction is 13,14-dihydro-15-oxo-prostaglandin F1alpha + NADP(+) = 15-oxoprostaglandin F1alpha + NADPH + H(+). In terms of biological role, functions as 15-oxo-prostaglandin 13-reductase and acts on 15-keto-PGE1, 15-keto-PGE2, 15-keto-PGE1-alpha and 15-keto-PGE2-alpha with highest activity towards 15-keto-PGE2. Overexpression represses transcriptional activity of PPARG and inhibits adipocyte differentiation. This chain is Prostaglandin reductase 2, found in Rattus norvegicus (Rat).